Reading from the N-terminus, the 195-residue chain is Interferon tau-5 (195 aa).

The N-terminal stretch at 1 to 23 (MAFVLSLLMALVLVSYGPGGSLG) is a signal peptide. Cystine bridges form between Cys-24–Cys-122 and Cys-52–Cys-162.

This sequence belongs to the alpha/beta interferon family. IFN-alphaII subfamily. Constitutively and exclusively expressed in the mononuclear cells of the extraembryonic trophectoderm.

It localises to the secreted. In terms of biological role, paracrine hormone primarily responsible for maternal recognition of pregnancy. Interacts with endometrial receptors, probably type I interferon receptors, and blocks estrogen receptor expression, preventing the estrogen-induced increase in oxytocin receptor expression in the endometrium. This results in the suppression of the pulsatile endometrial release of the luteolytic hormone prostaglandin F2-alpha, hindering the regression of the corpus luteum (luteolysis) and therefore a return to ovarian cyclicity. This, and a possible direct effect of IFN-tau on prostaglandin synthesis, leads in turn to continued ovarian progesterone secretion, which stimulates the secretion by the endometrium of the nutrients required for the growth of the conceptus. In summary, displays particularly high antiviral and antiproliferative potency concurrently with particular weak cytotoxicity, high antiluteolytic activity and immunomodulatory properties. In contrast with other IFNs, IFN-tau is not virally inducible. This chain is Interferon tau-5 (IFNT5), found in Ovis aries (Sheep).